Reading from the N-terminus, the 267-residue chain is MKENRITRLMKQDKKLLLAYYMPEFPVPGATLPVLEALQENGADIIELGMPYSDPIGDGPVIQDAAHKAISHGVTVRSILDLVKQARAGEGCKKITTPILLMGYSNPLIAYGGDCFMADAVEAGVDGLLIPDLPPEESEDFLERARSFGLTVVYLISPVTPPDRIELIDCMSTDFSYCLAVNATTGTGKLDTAGMDEQIAEYLKRVRKHAKKKFVVGFGIKDRERVRKMWELADGAVVGSALLQQVASAKTPEETAAMAAEFWQSLR.

Catalysis depends on proton acceptor residues glutamate 47 and aspartate 58.

Belongs to the TrpA family. Tetramer of two alpha and two beta chains.

It carries out the reaction (1S,2R)-1-C-(indol-3-yl)glycerol 3-phosphate + L-serine = D-glyceraldehyde 3-phosphate + L-tryptophan + H2O. Its pathway is amino-acid biosynthesis; L-tryptophan biosynthesis; L-tryptophan from chorismate: step 5/5. In terms of biological role, the alpha subunit is responsible for the aldol cleavage of indoleglycerol phosphate to indole and glyceraldehyde 3-phosphate. This Chlorobaculum parvum (strain DSM 263 / NCIMB 8327) (Chlorobium vibrioforme subsp. thiosulfatophilum) protein is Tryptophan synthase alpha chain.